We begin with the raw amino-acid sequence, 447 residues long: NADP-specific glutamate dehydrogenase (447 aa).

Substrate is bound by residues K92, Q113, and K116. The active-site Proton donor is K128. Substrate is bound at residue G167. The NADP(+) site is built by T211 and N242. Residue S380 coordinates substrate.

Belongs to the Glu/Leu/Phe/Val dehydrogenases family. Homohexamer.

The catalysed reaction is L-glutamate + NADP(+) + H2O = 2-oxoglutarate + NH4(+) + NADPH + H(+). In terms of biological role, catalyzes the reversible oxidative deamination of glutamate to alpha-ketoglutarate and ammonia. In Salmonella typhi, this protein is NADP-specific glutamate dehydrogenase (gdhA).